Here is a 285-residue protein sequence, read N- to C-terminus: Nucleotide-binding protein NTHI1314 (285 aa).

Residue 8-15 (GRSGAGKS) coordinates ATP. Residue 56–59 (DIRN) participates in GTP binding.

Belongs to the RapZ-like family.

Functionally, displays ATPase and GTPase activities. This is Nucleotide-binding protein NTHI1314 from Haemophilus influenzae (strain 86-028NP).